The chain runs to 1379 residues: Attractin-like protein 1 (1379 aa).

A disordered region spans residues 1–23; it reads METGGRARTGTPQPAAPGVWRAR. The N-terminal stretch at 1–52 is a signal peptide; the sequence is METGGRARTGTPQPAAPGVWRARPAGGGGGGASSWLLDGNSWLLCYGFLYLA. An EGF-like 1 domain is found at 53 to 91; that stretch reads LYAQVSQSKPCERTGSCFSGRCVNSTCLCDPGWVGDQCQ. Topologically, residues 53-1230 are extracellular; it reads LYAQVSQSKP…FSQHNTIMDL (1178 aa). 3 disulfide bridges follow: C63–C79, C81–C90, and C93–C119. N76 carries an N-linked (GlcNAc...) asparagine glycan. A CUB domain is found at 93-209; sequence CQGRFKLTEP…TGFNIFYSIN (117 aa). 2 N-linked (GlcNAc...) asparagine glycosylation sites follow: N174 and N198. The region spanning 207 to 245 is the EGF-like 2 domain; the sequence is SINSCPNNCSGHGKCTTSVSVPSQVYCECDKYWKGEACD. 3 disulfide bridges follow: C211–C221, C215–C233, and C235–C244. 6 Kelch repeats span residues 316-365, 367-415, 427-475, 480-531, 533-591, and 592-638; these read FMWV…LYQE, IFMY…EGHS, VMII…SVYD, SIYV…LING, MLIF…VING, and SMYI…WNKN. N380 is a glycosylation site (N-linked (GlcNAc...) asparagine). 3 PSI domains span residues 614–657, 666–709, and 715–760; these read NCKA…AKCP, RCYR…TKCH, and ICNK…DACL. In terms of domain architecture, C-type lectin spans 755-873; it reads IGDACLRVNS…TSMANGLVCE (119 aa). Residues N763, N778, and N898 are each glycosylated (N-linked (GlcNAc...) asparagine). An intrachain disulfide couples C776 to C872. 2 consecutive PSI domains span residues 889 to 939 and 942 to 1012; these read PCSL…ATCS and NCSG…IQCP. 8 disulfides stabilise this stretch: C1014–C1022, C1016–C1028, C1031–C1040, C1043–C1057, C1060–C1069, C1062–C1076, C1078–C1088, and C1091–C1106. 2 consecutive Laminin EGF-like domains span residues 1014-1059 and 1060-1108; these read CQCN…QCTA and CTCS…TCYY. N1157 carries an N-linked (GlcNAc...) asparagine glycan. The chain crosses the membrane as a helical span at residues 1231–1251; the sequence is VQFFVTFFSCFLSLLLVAAVV. Residues 1252-1379 are Cytoplasmic-facing; it reads WKIKQTCWAS…HLSTRQGTCV (128 aa). The disordered stretch occupies residues 1354 to 1379; the sequence is KASDSKDKTSGVRNRKHLSTRQGTCV.

In terms of assembly, interacts with MC4R.

The protein resides in the membrane. In terms of biological role, may play a role in melanocortin signaling pathways that regulate energy homeostasis. The polypeptide is Attractin-like protein 1 (ATRNL1) (Homo sapiens (Human)).